Consider the following 277-residue polypeptide: Urease accessory protein UreD (277 aa).

Belongs to the UreD family. As to quaternary structure, ureD, UreF and UreG form a complex that acts as a GTP-hydrolysis-dependent molecular chaperone, activating the urease apoprotein by helping to assemble the nickel containing metallocenter of UreC. The UreE protein probably delivers the nickel.

It localises to the cytoplasm. Required for maturation of urease via the functional incorporation of the urease nickel metallocenter. This is Urease accessory protein UreD from Pseudomonas putida (strain ATCC 47054 / DSM 6125 / CFBP 8728 / NCIMB 11950 / KT2440).